Consider the following 503-residue polypeptide: Probable protein kinase UbiB (503 aa).

The chain crosses the membrane as a helical span at residues 13 to 35 (TFYRYRLAGLCASLMGSGWICAL). One can recognise a Protein kinase domain in the interval 120–491 (EFETEPIASA…QQRQSLWLAV (372 aa)). Residues 126 to 134 (IASASIAQV) and Lys-148 contribute to the ATP site. Catalysis depends on Asp-283, which acts as the Proton acceptor. Residues 485 to 502 (QSLWLAVIAVVLLLILLL) form a helical membrane-spanning segment.

It belongs to the ABC1 family. UbiB subfamily.

Its subcellular location is the cell inner membrane. It functions in the pathway cofactor biosynthesis; ubiquinone biosynthesis [regulation]. In terms of biological role, is probably a protein kinase regulator of UbiI activity which is involved in aerobic coenzyme Q (ubiquinone) biosynthesis. The polypeptide is Probable protein kinase UbiB (Neisseria meningitidis serogroup B (strain ATCC BAA-335 / MC58)).